We begin with the raw amino-acid sequence, 195 residues long: NADH dehydrogenase [ubiquinone] iron-sulfur protein 3 (195 aa).

Belongs to the complex I 30 kDa subunit family. In terms of assembly, complex I is composed of about 45 different subunits. This is a component of the iron-sulfur (IP) fragment of the enzyme.

The protein localises to the mitochondrion inner membrane. The catalysed reaction is a ubiquinone + NADH + 5 H(+)(in) = a ubiquinol + NAD(+) + 4 H(+)(out). Functionally, core subunit of the mitochondrial membrane respiratory chain NADH dehydrogenase (Complex I) that is believed to belong to the minimal assembly required for catalysis. Complex I functions in the transfer of electrons from NADH to the respiratory chain. The immediate electron acceptor for the enzyme is believed to be ubiquinone. In Marchantia polymorpha (Common liverwort), this protein is NADH dehydrogenase [ubiquinone] iron-sulfur protein 3 (NAD9).